The primary structure comprises 103 residues: UPF0145 protein Dred_2155 (103 aa).

It belongs to the UPF0145 family.

The sequence is that of UPF0145 protein Dred_2155 from Desulforamulus reducens (strain ATCC BAA-1160 / DSM 100696 / MI-1) (Desulfotomaculum reducens).